Here is a 224-residue protein sequence, read N- to C-terminus: Ribonuclease 3 (224 aa).

The 123-residue stretch at 5–127 (LERLCRRLNY…ILAAIYLDGG (123 aa)) folds into the RNase III domain. Residue glutamate 40 participates in Mg(2+) binding. The active site involves aspartate 44. Residues aspartate 113 and glutamate 116 each contribute to the Mg(2+) site. Glutamate 116 is a catalytic residue. In terms of domain architecture, DRBM spans 154–224 (DAKTQLQEFL…AKAMLEQLQG (71 aa)).

This sequence belongs to the ribonuclease III family. Homodimer. Mg(2+) serves as cofactor.

It localises to the cytoplasm. The enzyme catalyses Endonucleolytic cleavage to 5'-phosphomonoester.. Its function is as follows. Digests double-stranded RNA. Involved in the processing of primary rRNA transcript to yield the immediate precursors to the large and small rRNAs (23S and 16S). Processes some mRNAs, and tRNAs when they are encoded in the rRNA operon. Processes pre-crRNA and tracrRNA of type II CRISPR loci if present in the organism. The polypeptide is Ribonuclease 3 (Legionella pneumophila subsp. pneumophila (strain Philadelphia 1 / ATCC 33152 / DSM 7513)).